The chain runs to 395 residues: MVKKFKNVFMIVADSMGIGKDQKQESFGDNGANTFLHVWQNYDLQIPNLKKLGIEALVSLKDKNEDLKPQAYVGKIFAKSNAKDTLAGHWEMMGIQTKVANPNFIEKGFPDELIKELEKAFDGRKIIGNENASGTEILKRLAHREIENNEIIVYTSPDSTLQICGHEEHMGLENLYRYAKAARQICSSKSIWNVARVIARPYVGQNGSYTRTFNRHDYANKPSETLLNSLQKAKIQTIAVGKINDIFVGQAIDKVYPPASDVENMDVAIEIAKTKKENQFVFVNLVEFDSHYGHRRDVIGYGKNIDSFDKKLGELLEVLSDDDLLIITADHGNDPTFPGSSHTREALPLIVYSKAFKNPSYLKTLLGLGTSGNIVARNFGLKTIETGEDIWDKLK.

Asp-14, Asp-289, His-294, Asp-330, His-331, and His-342 together coordinate Mn(2+).

Belongs to the phosphopentomutase family. Requires Mn(2+) as cofactor.

The protein localises to the cytoplasm. The catalysed reaction is 2-deoxy-alpha-D-ribose 1-phosphate = 2-deoxy-D-ribose 5-phosphate. It carries out the reaction alpha-D-ribose 1-phosphate = D-ribose 5-phosphate. Its pathway is carbohydrate degradation; 2-deoxy-D-ribose 1-phosphate degradation; D-glyceraldehyde 3-phosphate and acetaldehyde from 2-deoxy-alpha-D-ribose 1-phosphate: step 1/2. Functionally, isomerase that catalyzes the conversion of deoxy-ribose 1-phosphate (dRib-1-P) and ribose 1-phosphate (Rib-1-P) to deoxy-ribose 5-phosphate (dRib-5-P) and ribose 5-phosphate (Rib-5-P), respectively. The polypeptide is Phosphopentomutase (Mycoplasmopsis pulmonis (strain UAB CTIP) (Mycoplasma pulmonis)).